The following is a 342-amino-acid chain: Nicotinate-nucleotide--dimethylbenzimidazole phosphoribosyltransferase (342 aa).

The active-site Proton acceptor is E311.

The protein belongs to the CobT family.

The catalysed reaction is 5,6-dimethylbenzimidazole + nicotinate beta-D-ribonucleotide = alpha-ribazole 5'-phosphate + nicotinate + H(+). The protein operates within nucleoside biosynthesis; alpha-ribazole biosynthesis; alpha-ribazole from 5,6-dimethylbenzimidazole: step 1/2. In terms of biological role, catalyzes the synthesis of alpha-ribazole-5'-phosphate from nicotinate mononucleotide (NAMN) and 5,6-dimethylbenzimidazole (DMB). This chain is Nicotinate-nucleotide--dimethylbenzimidazole phosphoribosyltransferase, found in Shewanella loihica (strain ATCC BAA-1088 / PV-4).